A 448-amino-acid polypeptide reads, in one-letter code: RuvB-like 2 (448 aa).

Residue 73–80 (GEPGAGKT) coordinates ATP.

The protein belongs to the RuvB family. As to quaternary structure, forms homohexameric rings. May form a dodecamer with ruvb-1 made of two stacked hexameric rings. As to expression, expressed in gonadal cells.

Its subcellular location is the cytoplasm. The protein resides in the nucleus. The catalysed reaction is ATP + H2O = ADP + phosphate + H(+). Its function is as follows. Possesses single-stranded DNA-stimulated ATPase and ATP-dependent DNA helicase (5' to 3') activity suggesting a role in nuclear processes such as recombination and transcription. May participate in several chromatin remodeling complexes that mediate the ATP-dependent exchange of histones and remodel chromatin by shifting nucleosomes. Involvement in these complexes is likely required for transcriptional activation of selected genes and DNA repair in response to DNA damage. Has a role in gonadal development. Involved in the endoplasmic reticulum (ER)-associated degradation (ERAD) pathway where it negatively regulates expression of ER stress response genes. Specifically, negatively controls the expression of ER homeostasis regulator ckb-2 in a cdc-48.1/2-dependent manner. This is RuvB-like 2 from Caenorhabditis elegans.